Here is a 156-residue protein sequence, read N- to C-terminus: Large ribosomal subunit protein uL15 (156 aa).

Residues 1-16 (MVRRFKRGTKYRRGSR) show a composition bias toward basic residues. A disordered region spans residues 1–37 (MVRRFKRGTKYRRGSRTHGWGRVGQHRKSGGSGGKGM).

It belongs to the universal ribosomal protein uL15 family. In terms of assembly, part of the 50S ribosomal subunit.

Functionally, binds to the 23S rRNA. The protein is Large ribosomal subunit protein uL15 of Pyrobaculum aerophilum (strain ATCC 51768 / DSM 7523 / JCM 9630 / CIP 104966 / NBRC 100827 / IM2).